We begin with the raw amino-acid sequence, 471 residues long: Iroquois-class homeodomain protein IRX-2 (471 aa).

The segment at residues 112 to 175 (LNDPAYRKNA…ANARRRLKKE (64 aa)) is a DNA-binding region (homeobox; TALE-type). 2 disordered regions span residues 176–373 (NKMT…SPYP) and 424–471 (APKA…QPYL). The residue at position 186 (Ser-186) is a Phosphoserine. Basic and acidic residues predominate over residues 195 to 209 (DATRSKDESPDKAQE). Acidic residues predominate over residues 261 to 273 (DDLEDDEDDDEEG). A compositionally biased stretch (low complexity) spans 355-367 (PAAAAPASTGAPP). The segment covering 462–471 (VVGGGVQPYL) has biased composition (gly residues).

The protein belongs to the TALE/IRO homeobox family.

It localises to the nucleus. This chain is Iroquois-class homeodomain protein IRX-2 (IRX2), found in Homo sapiens (Human).